A 370-amino-acid polypeptide reads, in one-letter code: Chorismate synthase (370 aa).

R48 contributes to the NADP(+) binding site. FMN is bound by residues 125 to 127, 241 to 242, G285, 300 to 304, and R326; these read RSS, NA, and KPTSS.

It belongs to the chorismate synthase family. Homotetramer. Requires FMNH2 as cofactor.

The enzyme catalyses 5-O-(1-carboxyvinyl)-3-phosphoshikimate = chorismate + phosphate. The protein operates within metabolic intermediate biosynthesis; chorismate biosynthesis; chorismate from D-erythrose 4-phosphate and phosphoenolpyruvate: step 7/7. Catalyzes the anti-1,4-elimination of the C-3 phosphate and the C-6 proR hydrogen from 5-enolpyruvylshikimate-3-phosphate (EPSP) to yield chorismate, which is the branch point compound that serves as the starting substrate for the three terminal pathways of aromatic amino acid biosynthesis. This reaction introduces a second double bond into the aromatic ring system. This chain is Chorismate synthase, found in Jannaschia sp. (strain CCS1).